A 284-amino-acid polypeptide reads, in one-letter code: Polyamine aminopropyltransferase (284 aa).

One can recognise a PABS domain in the interval 2–237; it reads ELWYTEQHTE…GHWLFGFASK (236 aa). Residue glutamine 31 participates in S-methyl-5'-thioadenosine binding. Residues histidine 62 and aspartate 86 each coordinate spermidine. S-methyl-5'-thioadenosine contacts are provided by residues glutamate 106 and 137 to 138; that span reads DG. The active-site Proton acceptor is the aspartate 155. Residue 155 to 158 coordinates spermidine; that stretch reads DSTD. S-methyl-5'-thioadenosine is bound at residue proline 162.

It belongs to the spermidine/spermine synthase family. Homodimer or homotetramer.

The protein resides in the cytoplasm. The enzyme catalyses S-adenosyl 3-(methylsulfanyl)propylamine + putrescine = S-methyl-5'-thioadenosine + spermidine + H(+). It functions in the pathway amine and polyamine biosynthesis; spermidine biosynthesis; spermidine from putrescine: step 1/1. Functionally, catalyzes the irreversible transfer of a propylamine group from the amino donor S-adenosylmethioninamine (decarboxy-AdoMet) to putrescine (1,4-diaminobutane) to yield spermidine. The chain is Polyamine aminopropyltransferase from Alkaliphilus oremlandii (strain OhILAs) (Clostridium oremlandii (strain OhILAs)).